A 398-amino-acid polypeptide reads, in one-letter code: Beta-1,6-galactosyltransferase GALT29A (398 aa).

The Cytoplasmic segment spans residues 1-6 (MKRSVR). Residues 7–27 (PLFSALLFAFFAATLICRVAI) traverse the membrane as a helical; Signal-anchor for type II membrane protein segment. The Lumenal portion of the chain corresponds to 28–398 (RRSSFSFASA…FKIPLVQVYH (371 aa)). N-linked (GlcNAc...) asparagine glycosylation is found at Asn221 and Asn346.

Belongs to the glycosyltransferase 29 family. Interacts with GALT31A.

The protein resides in the golgi apparatus membrane. Its function is as follows. Galactosyltransferase involved in the biosynthesis of type II arabinogalactan. Possesses galactosyltransferase (GalT) activity in vitro, transferring galactose from UDP-galactose to a mixture of various oligosaccharides derived from arabinogalactan proteins. Forms a complex with GALT31A that can work cooperatively to enhance the activities of adding galactose residues at O6 positions to beta-1,6-galactan and beta-1,3-galactan. This Arabidopsis thaliana (Mouse-ear cress) protein is Beta-1,6-galactosyltransferase GALT29A.